The chain runs to 78 residues: Small ribosomal subunit protein bS18 (78 aa).

The protein belongs to the bacterial ribosomal protein bS18 family. As to quaternary structure, part of the 30S ribosomal subunit. Forms a tight heterodimer with protein bS6.

Its function is as follows. Binds as a heterodimer with protein bS6 to the central domain of the 16S rRNA, where it helps stabilize the platform of the 30S subunit. The protein is Small ribosomal subunit protein bS18 of Alkaliphilus oremlandii (strain OhILAs) (Clostridium oremlandii (strain OhILAs)).